The sequence spans 117 residues: Hemerythrin subunit alpha (117 aa).

Fe cation is bound by residues His-24, His-53, Glu-57, His-72, His-76, His-105, and Asp-110.

The protein belongs to the hemerythrin family. In terms of assembly, octamer composed of two types of chains: alpha and beta.

Its function is as follows. Hemerythrin is a respiratory protein in blood cells of certain marine worms. The oxygen-binding site in each chain contains two iron atoms. This Lingula reevii (Inarticulated brachiopod) protein is Hemerythrin subunit alpha.